The chain runs to 99 residues: NADH-quinone oxidoreductase subunit K (99 aa).

The next 3 membrane-spanning stretches (helical) occupy residues 3-23, 28-48, and 59-79; these read PENYLYLSALLFTIGAAGVLI, IIVFMCIELMLNASNLAFVTF, and VFAFFTMVVAAAEVVVGLAII.

The protein belongs to the complex I subunit 4L family. As to quaternary structure, NDH-1 is composed of 14 different subunits. Subunits NuoA, H, J, K, L, M, N constitute the membrane sector of the complex.

It is found in the cell membrane. It catalyses the reaction a quinone + NADH + 5 H(+)(in) = a quinol + NAD(+) + 4 H(+)(out). NDH-1 shuttles electrons from NADH, via FMN and iron-sulfur (Fe-S) centers, to quinones in the respiratory chain. The immediate electron acceptor for the enzyme in this species is believed to be a menaquinone. Couples the redox reaction to proton translocation (for every two electrons transferred, four hydrogen ions are translocated across the cytoplasmic membrane), and thus conserves the redox energy in a proton gradient. The polypeptide is NADH-quinone oxidoreductase subunit K (Rhodococcus jostii (strain RHA1)).